A 123-amino-acid chain; its full sequence is Secreted LysM effector Lys1 (123 aa).

Residues 1–20 form the signal peptide; it reads MMGLAKTLLLASQLTAVVVA. One can recognise a LysM domain in the interval 72–118; that stretch reads KFCWVQAGNKCYQVAMENHISLADFLKWNPGAGSDCRTLWANTYACV.

The protein belongs to the secreted LysM effector family.

Its function is as follows. Might have a role in sequestration of chitin oligosaccharides (breakdown products of fungal cell walls that are released during invasion and act as triggers of host immunity) to dampen host defense. The sequence is that of Secreted LysM effector Lys1 from Pochonia chlamydosporia (strain 123) (Metacordyceps chlamydosporia).